A 1058-amino-acid chain; its full sequence is Carbamoyl phosphate synthase large chain (1058 aa).

The tract at residues 1-401 (MPKRKDIKTI…SLLKAIRSLE (401 aa)) is carboxyphosphate synthetic domain. The ATP site is built by arginine 129, arginine 169, glycine 175, glycine 176, lysine 208, isoleucine 210, glutamate 215, glycine 241, isoleucine 242, histidine 243, glutamine 284, and glutamate 298. The 195-residue stretch at 133–327 (RDLMNELNEP…IAKIAAKIAV (195 aa)) folds into the ATP-grasp 1 domain. Glutamine 284, glutamate 298, and asparagine 300 together coordinate Mg(2+). 3 residues coordinate Mn(2+): glutamine 284, glutamate 298, and asparagine 300. Residues 402–546 (YGVHHLGLPN…YSTYEFENES (145 aa)) form an oligomerization domain region. Positions 547 to 929 (TRSDKEKIVV…ALYKGLTAAG (383 aa)) are carbamoyl phosphate synthetic domain. The ATP-grasp 2 domain occupies 671–861 (EKLLIGLKIP…VANIAMQCIL (191 aa)). ATP is bound by residues arginine 707, arginine 746, leucine 748, glutamate 752, glycine 777, valine 778, histidine 779, serine 780, glutamine 820, and glutamate 832. Residues glutamine 820, glutamate 832, and asparagine 834 each coordinate Mg(2+). 3 residues coordinate Mn(2+): glutamine 820, glutamate 832, and asparagine 834. In terms of domain architecture, MGS-like spans 930 to 1058 (IKIKDYGRVL…ESMSFRVQTL (129 aa)). The tract at residues 930–1058 (IKIKDYGRVL…ESMSFRVQTL (129 aa)) is allosteric domain.

The protein belongs to the CarB family. As to quaternary structure, composed of two chains; the small (or glutamine) chain promotes the hydrolysis of glutamine to ammonia, which is used by the large (or ammonia) chain to synthesize carbamoyl phosphate. Tetramer of heterodimers (alpha,beta)4. It depends on Mg(2+) as a cofactor. The cofactor is Mn(2+).

It carries out the reaction hydrogencarbonate + L-glutamine + 2 ATP + H2O = carbamoyl phosphate + L-glutamate + 2 ADP + phosphate + 2 H(+). The catalysed reaction is hydrogencarbonate + NH4(+) + 2 ATP = carbamoyl phosphate + 2 ADP + phosphate + 2 H(+). The protein operates within amino-acid biosynthesis; L-arginine biosynthesis; carbamoyl phosphate from bicarbonate: step 1/1. It functions in the pathway pyrimidine metabolism; UMP biosynthesis via de novo pathway; (S)-dihydroorotate from bicarbonate: step 1/3. Its function is as follows. Large subunit of the glutamine-dependent carbamoyl phosphate synthetase (CPSase). CPSase catalyzes the formation of carbamoyl phosphate from the ammonia moiety of glutamine, carbonate, and phosphate donated by ATP, constituting the first step of 2 biosynthetic pathways, one leading to arginine and/or urea and the other to pyrimidine nucleotides. The large subunit (synthetase) binds the substrates ammonia (free or transferred from glutamine from the small subunit), hydrogencarbonate and ATP and carries out an ATP-coupled ligase reaction, activating hydrogencarbonate by forming carboxy phosphate which reacts with ammonia to form carbamoyl phosphate. This chain is Carbamoyl phosphate synthase large chain, found in Fusobacterium nucleatum subsp. nucleatum (strain ATCC 25586 / DSM 15643 / BCRC 10681 / CIP 101130 / JCM 8532 / KCTC 2640 / LMG 13131 / VPI 4355).